Consider the following 345-residue polypeptide: Sesquiterpene synthase PILCRDRAFT_825684 (345 aa).

Mg(2+)-binding residues include Asp-91, Asn-226, Ser-230, and Glu-234. Positions Asp-91 to Asp-95 match the DDXXD motif motif. Residues Arg-316 and Tyr-317 each contribute to the (2E,6E)-farnesyl diphosphate site.

The protein belongs to the terpene synthase family. Requires Mg(2+) as cofactor.

It catalyses the reaction (2E,6E)-farnesyl diphosphate = viridiflorene + diphosphate. Terpene cyclase that catalyzes the cyclization of farnesyl diphosphate (FPP) to various sesquiterpenes, including beta-elemene, viridiflorene and gamma-cadinene. Gamma-cadinene is the major product of PILCRDRAFT_825684. The sequence is that of Sesquiterpene synthase PILCRDRAFT_825684 from Piloderma croceum (strain F 1598).